Reading from the N-terminus, the 323-residue chain is Olfactory receptor 4K5 (323 aa).

At 1 to 25 (MDKSNSSVVSEFVLLGLCSSQKLQL) the chain is on the extracellular side. A glycan (N-linked (GlcNAc...) asparagine) is linked at Asn-5. Residues 26 to 49 (FYFCFFSVLYTVIVLGNLLIILTV) traverse the membrane as a helical segment. Residues 50 to 57 (TSDTSLHS) lie on the Cytoplasmic side of the membrane. Residues 58–79 (PMYFLLGNLSFVDICQASFATP) traverse the membrane as a helical segment. Residues 80–100 (KMIADFLSAHETISFSGCIAQ) are Extracellular-facing. Cysteines 97 and 189 form a disulfide. The chain crosses the membrane as a helical span at residues 101 to 120 (IFFIHLFTGGEMVLLVSMAY). Residues 121-139 (DRYVAICKPLYYVVIMSRR) lie on the Cytoplasmic side of the membrane. A helical membrane pass occupies residues 140 to 158 (TCTVLVMISWAVSLVHTLS). The Extracellular portion of the chain corresponds to 159-195 (QLSFTVNLPFCGPNVVDSFFCDLPRVTKLACLDSYII). A helical membrane pass occupies residues 196–219 (EILIVVNSGILSLSTFSLLVSSYI). The Cytoplasmic segment spans residues 220–235 (IILVTVWLKSSAAMAK). A helical transmembrane segment spans residues 236–258 (AFSTLASHIAVVILFFGPCIFIY). Topologically, residues 259 to 269 (VWPFTISPLDK) are extracellular. The helical transmembrane segment at 270-289 (FLAIFYTVFTPVLNPIIYTL) threads the bilayer. Residues 290–323 (RNRDMKAAVRKIVNHYLRPRRISEMSLVVRTSFH) are Cytoplasmic-facing.

This sequence belongs to the G-protein coupled receptor 1 family.

The protein resides in the cell membrane. Its function is as follows. Odorant receptor. This Homo sapiens (Human) protein is Olfactory receptor 4K5 (OR4K5).